A 360-amino-acid polypeptide reads, in one-letter code: Phospho-N-acetylmuramoyl-pentapeptide-transferase (360 aa).

10 helical membrane-spanning segments follow: residues 27 to 47, 73 to 93, 94 to 114, 132 to 152, 168 to 188, 199 to 219, 236 to 256, 263 to 283, 288 to 308, and 338 to 358; these read ILSI…LIAW, TMGG…WADL, TNPY…VGFV, WKYF…YAYG, VMPQ…VGTS, GLAI…AWAT, ASEL…FLWF, VFMG…IAVL, FLLV…ILQV, and VIVR…ATLK.

The protein belongs to the glycosyltransferase 4 family. MraY subfamily. The cofactor is Mg(2+).

It is found in the cell inner membrane. The catalysed reaction is UDP-N-acetyl-alpha-D-muramoyl-L-alanyl-gamma-D-glutamyl-meso-2,6-diaminopimeloyl-D-alanyl-D-alanine + di-trans,octa-cis-undecaprenyl phosphate = di-trans,octa-cis-undecaprenyl diphospho-N-acetyl-alpha-D-muramoyl-L-alanyl-D-glutamyl-meso-2,6-diaminopimeloyl-D-alanyl-D-alanine + UMP. It functions in the pathway cell wall biogenesis; peptidoglycan biosynthesis. Catalyzes the initial step of the lipid cycle reactions in the biosynthesis of the cell wall peptidoglycan: transfers peptidoglycan precursor phospho-MurNAc-pentapeptide from UDP-MurNAc-pentapeptide onto the lipid carrier undecaprenyl phosphate, yielding undecaprenyl-pyrophosphoryl-MurNAc-pentapeptide, known as lipid I. The protein is Phospho-N-acetylmuramoyl-pentapeptide-transferase of Aliivibrio fischeri (strain MJ11) (Vibrio fischeri).